The sequence spans 351 residues: Renin receptor (351 aa).

Residues 1–17 (MAVLVVFLSFLVADVFG) form the signal peptide. Residues 18-303 (NEFSILRSPG…YNLAYKYNFE (286 aa)) lie on the Extracellular side of the membrane. Residues 304 to 324 (YPVVFNLVLWIMIGLALTLIV) form a helical membrane-spanning segment. At 325 to 351 (TCYNIWNMDPGYDSIIYRMTNQKIRMD) the chain is on the cytoplasmic side. Residues 347-351 (KIRMD) carry the Mediates retrograde transport to the ER motif.

Interacts with renin. Accessory component of the multisubunit proton-transporting vacuolar (V)-ATPase protein pump. Interacts (via N-terminus) with ATP6AP1 (via N-terminus). Interacts with ATP6V0D1; ATP6V0D1 is a V-ATPase complex subunit and the interaction promotes V-ATPase complex assembly. Interacts with TMEM9; TMEM9 is a V-ATPase assembly regulator and the interaction induces the interaction with ATP6V0D1. Interacts with VMA21 (via N-terminus); VMA21 is a V-ATPase accessory component. In terms of processing, phosphorylated. Post-translationally, proteolytically cleaved by a furin-like convertase in the trans-Golgi network to generate N- and C-terminal fragments. As to expression, expressed in the brain.

Its subcellular location is the endoplasmic reticulum membrane. The protein resides in the lysosome membrane. It is found in the cytoplasmic vesicle. It localises to the autophagosome membrane. The protein localises to the cell projection. Its subcellular location is the dendritic spine membrane. The protein resides in the axon. It is found in the endosome membrane. It localises to the clathrin-coated vesicle membrane. The protein localises to the secretory vesicle. Its subcellular location is the synaptic vesicle membrane. In terms of biological role, multifunctional protein which functions as a renin, prorenin cellular receptor and is involved in the assembly of the lysosomal proton-transporting V-type ATPase (V-ATPase) and the acidification of the endo-lysosomal system. May mediate renin-dependent cellular responses by activating ERK1 and ERK2. By increasing the catalytic efficiency of renin in AGT/angiotensinogen conversion to angiotensin I, may also play a role in the renin-angiotensin system (RAS). Through its function in V-type ATPase (v-ATPase) assembly and acidification of the lysosome it regulates protein degradation and may control different signaling pathways important for proper brain development, synapse morphology and synaptic transmission. The polypeptide is Renin receptor (ATP6AP2) (Bos taurus (Bovine)).